We begin with the raw amino-acid sequence, 89 residues long: Small membrane A-kinase anchor protein (89 aa).

The interval 1 to 29 (MGCMKSKRRDPTQNSDSSEKVDGKPGKHG) is disordered. A lipid anchor (N-myristoyl glycine) is attached at G2. Basic and acidic residues predominate over residues 17–29 (SSEKVDGKPGKHG).

Belongs to the small membrane AKAP family. May be palmitoylated at Cys-3.

The protein localises to the cell membrane. Its function is as follows. Binds to type I regulatory subunits of protein kinase A and may anchor/target them to the plasma membrane. In Danio rerio (Zebrafish), this protein is Small membrane A-kinase anchor protein.